A 339-amino-acid polypeptide reads, in one-letter code: DNA-directed RNA polymerase subunit alpha (339 aa).

Residues methionine 1–glutamate 233 form an alpha N-terminal domain (alpha-NTD) region. The alpha C-terminal domain (alpha-CTD) stretch occupies residues glycine 266 to leucine 339.

Belongs to the RNA polymerase alpha chain family. In plastids the minimal PEP RNA polymerase catalytic core is composed of four subunits: alpha, beta, beta', and beta''. When a (nuclear-encoded) sigma factor is associated with the core the holoenzyme is formed, which can initiate transcription.

The protein localises to the plastid. It is found in the chloroplast. It carries out the reaction RNA(n) + a ribonucleoside 5'-triphosphate = RNA(n+1) + diphosphate. Its function is as follows. DNA-dependent RNA polymerase catalyzes the transcription of DNA into RNA using the four ribonucleoside triphosphates as substrates. This chain is DNA-directed RNA polymerase subunit alpha, found in Saccharum hybrid (Sugarcane).